A 397-amino-acid chain; its full sequence is Mitochondrial inner membrane magnesium transporter LPE10 (397 aa).

Residues 1–48 (MLFIRQLSVIPKAPAFAKFFHTAGLVRQKLSDPNHLAILLQKNLAQRN) constitute a mitochondrion transit peptide. A helical transmembrane segment spans residues 318–338 (LMLLGLRFSIGLLSLAGSIFI). The short motif at 342–345 (YGMN) is the YGMN element. Residues 355-375 (VGFPVVSTLGVILMAYLFAFS) form a helical membrane-spanning segment.

Belongs to the CorA metal ion transporter (MIT) (TC 1.A.35) family. As to quaternary structure, forms homooligomers. Interacts with MRS2.

It localises to the mitochondrion inner membrane. Mitochondrial inner membrane magnesium transporter required for mitochondrial magnesium homeostasis. Modulates the conductance of the MRS2 channel. Involved in the splicing of mRNA group II introns in mitochondria by affecting mitochondrial magnesium concentrations, which are critical for group II intron splicing. The protein is Mitochondrial inner membrane magnesium transporter LPE10 (LPE10) of Kluyveromyces lactis (strain ATCC 8585 / CBS 2359 / DSM 70799 / NBRC 1267 / NRRL Y-1140 / WM37) (Yeast).